A 266-amino-acid polypeptide reads, in one-letter code: MMKTLSSGNCTLNVPAKNSYRMVVLGASRVGKSSIVSRFLNGRFEDQYTPTIEDFHRKVYNIHGDMYQLDILDTSGNHPFPAMRRLSILTGDVFILVFSLDSRESFDEVKRLQKQILEVKSCLKNKTKEAAELPMVICGNKNDHSELCRQVPAMEAELLVSGDENCAYFEVSAKKNTNVNEMFYVLFSMAKLPHEMSPALHHKISVQYGDAFHPRPFCMRRTKVAGAYGMVSPFARRPSVNSDLKYIKAKVLREGQARERDKCSIQ.

26–33 (GASRVGKS) provides a ligand contact to GTP. The Effector region signature appears at 48 to 56 (YTPTIEDFH). GTP-binding positions include 73-77 (DTSGN) and 140-143 (NKND). Positions 189 to 235 (MAKLPHEMSPALHHKISVQYGDAFHPRPFCMRRTKVAGAYGMVSPFA) are interaction with GNB1, GNB2 and GNB3. Cys-263 carries the post-translational modification Cysteine methyl ester. Cys-263 is lipidated: S-farnesyl cysteine. A propeptide spans 264 to 266 (SIQ) (removed in mature form).

Belongs to the small GTPase superfamily. RasD family. As to quaternary structure, monomer (Potential). Interacts with PIK3CA and UBE2I. Interacts with GNB1, GNB2 and GNB3. Farnesylated. Farnesylation is required for membrane targeting. Highly expressed in brain; prominently in the striatum and weakly in kidney, thyroid, lung, heart and testis. Not expressed in liver. Expressed in pancreatic cell lines and in a embryonic stem cell line.

The protein localises to the cell membrane. Functionally, GTPase signaling protein that binds to and hydrolyzes GTP. Regulates signaling pathways involving G-proteins-coupled receptor and heterotrimeric proteins such as GNB1, GNB2 and GNB3. May be involved in selected striatal competencies, mainly locomotor activity and motor coordination. The polypeptide is GTP-binding protein Rhes (Rasd2) (Mus musculus (Mouse)).